Reading from the N-terminus, the 478-residue chain is Lysine histidine transporter-like 7 (478 aa).

Topologically, residues 1–63 (MSIALGNLFD…ITESRKGNVY (63 aa)) are cytoplasmic. The segment at 15-45 (ESGGSPLFMSPAPSTDPQPISGEKNGGDGGR) is disordered. The chain crosses the membrane as a helical span at residues 64–86 (TATFHLLCSGIGLQVILLPAAFA). The Extracellular portion of the chain corresponds to 87-89 (ALG). The chain crosses the membrane as a helical span at residues 90 to 112 (WVWGTIILTVGFVWKLYTTWLLV). Residues 113-140 (QLHEAVPGIRISRYVRLAIASFGVKLGK) are Cytoplasmic-facing. The chain crosses the membrane as a helical span at residues 141 to 161 (LLGIFPVMYLSGGACTILVIT). The Extracellular segment spans residues 162 to 177 (GGKSIQQLLQIMSDDN). A helical transmembrane segment spans residues 178–198 (TAPLTSVQCFLVFSCIAMIMS). Topologically, residues 199–205 (QFPNLNS) are cytoplasmic. The helical transmembrane segment at 206–226 (LFGVSLIGAFMGIAYCTVIWI) threads the bilayer. Topologically, residues 227–241 (LPVASDSQRTQVSVS) are extracellular. Residues 242–262 (YATMDKSFVHIFNAIGLIALV) form a helical membrane-spanning segment. Over 263–291 (YRGNNLVLEIQGTLPSDSKNPSCKTMWRA) the chain is Cytoplasmic. The helical transmembrane segment at 292–312 (VMISHALVAICMFPLTFAVYW) threads the bilayer. The Extracellular portion of the chain corresponds to 313–340 (AYGDKIPATGGPVGNYLKLYTQEHSKRA). Residues 341–361 (ACFIHLTFIFSCLCSYPINLM) form a helical membrane-spanning segment. Residues 362–379 (PACDNIEMVYITKKKKPA) lie on the Cytoplasmic side of the membrane. Residues 380-402 (SIIVRMMLRVFLSLVCFTIAVGF) form a helical membrane-spanning segment. The Extracellular segment spans residues 403–406 (PFLP). The chain crosses the membrane as a helical span at residues 407-429 (YLAVLIGAIALLVTFTYPCFMWI). Over 430-439 (SIKKPQRKSP) the chain is Cytoplasmic. The chain crosses the membrane as a helical span at residues 440–460 (MWLFNVLVGCLGASLSVLLLV). The Extracellular segment spans residues 461-478 (ASAMRLAQKGLHANFFRP).

It belongs to the amino acid/polyamine transporter 2 family. Amino acid/auxin permease (AAAP) (TC 2.A.18.2) subfamily.

Its subcellular location is the cell membrane. In terms of biological role, amino acid transporter. The chain is Lysine histidine transporter-like 7 from Arabidopsis thaliana (Mouse-ear cress).